The sequence spans 589 residues: Transcription factor MYC4 (589 aa).

The segment at N99–G150 is JAZ-interaction domain. 4 disordered regions span residues E114 to R133, A291 to K326, I340 to N359, and A381 to R422. Positions N296–S308 are enriched in low complexity. Positions Q309–N322 are enriched in polar residues. Residues A381–K398 are compositionally biased toward basic and acidic residues. The span at K399–A408 shows a compositional bias: basic residues. Over residues N409–R422 the composition is skewed to basic and acidic residues. Residues E412–L461 enclose the bHLH domain.

In terms of assembly, homo- and heterodimer. Interacts with MYB28, MYB29, MYB34, MYB51, MYB76, MYB122, MYC3, AFPH2/NINJA and the JAZ repressors TIFY10A/JAZ1, TIFY10B/JAZ2, TIFY6B/JAZ3, TIFY6A/JAZ4, TIFY11A/JAZ5, TIFY11B/JAZ6, TIFY5B/JAZ7, TIFY5A/JAZ8, TIFY7/JAZ9, TIFY9/JAZ10, TIFY3A/JAZ11 and TIFY3B/JAZ12. As to expression, expressed constitutively at low levels. Preferentially expressed in vascular tissues.

The protein localises to the nucleus. Functionally, transcription factor involved in jasmonic acid (JA) gene regulation. With MYC2 and MYC3, controls additively subsets of JA-dependent responses. Can form complexes with all known glucosinolate-related MYBs to regulate glucosinolate biosynthesis. Binds to the G-box (5'-CACGTG-3') of promoters. Activates multiple TIFY/JAZ promoters. This is Transcription factor MYC4 (MYC4) from Arabidopsis thaliana (Mouse-ear cress).